Here is a 312-residue protein sequence, read N- to C-terminus: NAD-dependent protein deacylase Sirt4 (312 aa).

Residues 1 to 16 constitute a mitochondrion transit peptide; it reads MRVGQLLRFRSTSLRS. In terms of domain architecture, Deacetylase sirtuin-type spans 28-312; the sequence is KPVVEDDIKR…FDFRNSKSVS (285 aa). NAD(+)-binding positions include 53–73 and 134–137; these read GAGI…VGLY and QNVD. Residue His152 is the Proton acceptor of the active site. Zn(2+)-binding residues include Cys160, Cys163, Cys211, and Cys214. NAD(+) is bound by residues 251 to 253, 277 to 279, and Cys295; these read GSS and NIG.

This sequence belongs to the sirtuin family. Class II subfamily. Zn(2+) is required as a cofactor.

The protein resides in the mitochondrion matrix. It carries out the reaction N(6)-acetyl-L-lysyl-[protein] + NAD(+) + H2O = 2''-O-acetyl-ADP-D-ribose + nicotinamide + L-lysyl-[protein]. In terms of biological role, NAD-dependent protein deacylase. Catalyzes the NAD-dependent hydrolysis of acyl groups from lysine residues. In Drosophila melanogaster (Fruit fly), this protein is NAD-dependent protein deacylase Sirt4 (Sirt4).